Here is a 722-residue protein sequence, read N- to C-terminus: MQGQTTTVSFDGREIRLTTGRYAPQAGGSVLIECGDTAVLVTATQSPGREGADFLPLICDYEERLYAAGRIPGSFMRREGRPPERATLISRLIDRPLRPLFPSWMRDDIQVVATCLSLDERVPSDVLAVTASSMATLLAEIPFYGPMAAVRVGLLGDDFVLNPSFREIERGDLDLVVAGTPDGVVMIEAGANQLSEQDVIEAVDFGYEAVTELIKAQQSILKESGIDHKKPDEQEIDETLPNYLDKNGRKPIGELLKKFELTKKERDLKLEEIKTNLGEKIDSLKEDNAVKKAISSNPKLLTTSFKSLTKKLMREQIIKDGKRVDGRALDEVRKIEAAAGILPKRVHGSGLFQRGLTQVLSTATLGTPSDAQEMDDLNPSSDKTYIHHYNFPPYSVGETRPMRTPGRREVGHGALAERALIPVLPPKESFPYVLRVVSEVLSSNGSTSMGSVCGSTIALLDAGVPLKAPVSGAAMGLIKEGKEIRILTDIQGIEDFLGDMDFKVAGTEKGITALQMDMKVTGLEVKTIADAINQAKPARTHILEKMNETIDKPRETLSPHAPRLLSFRIDPELIGTVIGPGGRTIKGITERTNTKIDIEDGGIVTIASHDGVAAEEAQKIIEGLTRKVHEGEIFTGSITRIIPIGAFVEILPGKEGMIHISQLSEARVEKVEDVVKVGDEVTVRVREIDNRGRINLTLRGVSQNNNDMNYPQPTPTPVAPLN.

Mg(2+)-binding residues include D495 and D501. The KH domain occupies 562 to 621 (PRLLSFRIDPELIGTVIGPGGRTIKGITERTNTKIDIEDGGIVTIASHDGVAAEEAQKII). The S1 motif domain occupies 631–699 (GEIFTGSITR…NRGRINLTLR (69 aa)). Positions 701–711 (VSQNNNDMNYP) are enriched in polar residues. The tract at residues 701 to 722 (VSQNNNDMNYPQPTPTPVAPLN) is disordered. Residues 712 to 722 (QPTPTPVAPLN) are compositionally biased toward pro residues.

This sequence belongs to the polyribonucleotide nucleotidyltransferase family. Mg(2+) is required as a cofactor.

Its subcellular location is the cytoplasm. It catalyses the reaction RNA(n+1) + phosphate = RNA(n) + a ribonucleoside 5'-diphosphate. Involved in mRNA degradation. Catalyzes the phosphorolysis of single-stranded polyribonucleotides processively in the 3'- to 5'-direction. This is Polyribonucleotide nucleotidyltransferase from Prochlorococcus marinus (strain MIT 9211).